The following is a 300-amino-acid chain: Estradiol 17-beta-dehydrogenase 11 (300 aa).

The N-terminal stretch at 1–19 (MKFLLDVLLLLPLLIVCSL) is a signal peptide. 40–64 (LITGAGHGIGRLTAYEFAKLKSKLV) contributes to the NADP(+) binding site. Ser172 is a binding site for substrate. The Proton acceptor role is filled by Tyr185.

The protein belongs to the short-chain dehydrogenases/reductases (SDR) family. 17-beta-HSD 3 subfamily.

The protein localises to the endoplasmic reticulum. It is found in the lipid droplet. The catalysed reaction is 17beta-estradiol + NAD(+) = estrone + NADH + H(+). It carries out the reaction 17beta-estradiol + NADP(+) = estrone + NADPH + H(+). Its function is as follows. Can convert androstan-3-alpha,17-beta-diol (3-alpha-diol) to androsterone in vitro, suggesting that it may participate in androgen metabolism during steroidogenesis. May act by metabolizing compounds that stimulate steroid synthesis and/or by generating metabolites that inhibit it. Has no activity toward DHEA (dehydroepiandrosterone), or A-dione (4-androste-3,17-dione), and only a slight activity toward testosterone to A-dione. In Pongo abelii (Sumatran orangutan), this protein is Estradiol 17-beta-dehydrogenase 11 (HSD17B11).